Consider the following 81-residue polypeptide: uncharacterized protein (81 aa).

2 helical membrane passes run phenylalanine 10 to leucine 30 and valine 56 to isoleucine 76.

Its subcellular location is the host membrane. This is an uncharacterized protein from Acidianus two-tailed virus (ATV).